A 1311-amino-acid chain; its full sequence is Ubiquitin carboxyl-terminal hydrolase 36 (1311 aa).

2 stretches are compositionally biased toward low complexity: residues 120-134 (AAAA…SAGS) and 156-174 (STPT…SSSS). A disordered region spans residues 120-189 (AAAATNNGNS…NPNELPKPKR (70 aa)). Residues 212-533 (AGMINVGNTC…NSYIMFYELD (322 aa)) form the USP domain. Residue C221 is the Nucleophile of the active site. Residue H492 is the Proton acceptor of the active site. The segment at 546 to 575 (NGLRQLSNGHHHHQQQQQQHQQQQQQQPTV) is disordered. A compositionally biased stretch (low complexity) spans 560-572 (QQQQQHQQQQQQQ). S581 is subject to Phosphoserine. Disordered stretches follow at residues 587–620 (TRFI…GHSQ), 640–1095 (KFQE…GCLN), and 1136–1311 (DHGD…QQQS). 3 stretches are compositionally biased toward low complexity: residues 605-616 (TTTTTATNNTTN), 660-716 (APAV…QQQQ), and 759-774 (TLTL…STPT). T767 carries the phosphothreonine modification. Phosphoserine is present on residues S787 and S789. The segment covering 795-826 (SSGTPSSSTPTTTTTAAAAAASSPMQATAAAT) has biased composition (low complexity). A compositionally biased stretch (basic residues) spans 836–853 (ARKRSLPDHHHHHPHHHV). Over residues 869-879 (PATNFNSSSSK) the composition is skewed to polar residues. Positions 880 to 889 (QKTDAIDEIF) are enriched in basic and acidic residues. The span at 896-905 (NKKRINNKNQ) shows a compositional bias: basic residues. Residues 910–920 (GDEEEDDEETL) are compositionally biased toward acidic residues. Low complexity-rich tracts occupy residues 925-942 (NNSS…PTTN) and 950-979 (VSSS…STSA). Over residues 980–989 (PPSPKTPPSP) the composition is skewed to pro residues. A Phosphoserine modification is found at S982. T985 is subject to Phosphothreonine. The residue at position 988 (S988) is a Phosphoserine. The segment covering 1006 to 1020 (DDDDDEEEEDEDDEE) has biased composition (acidic residues). A compositionally biased stretch (low complexity) spans 1037-1050 (PFSSQQKPTPSPST). At S1047 the chain carries Phosphoserine. A Phosphothreonine modification is found at T1050. The span at 1060-1081 (FNGTSSSTPHVGNGYQSEPSTP) shows a compositional bias: polar residues. 2 stretches are compositionally biased toward low complexity: residues 1154–1176 (VVTT…TADA) and 1204–1221 (TANG…PGYN). Over residues 1246 to 1255 (QHASSSYRSN) the composition is skewed to polar residues. Over residues 1267–1276 (GGNGGGGSGG) the composition is skewed to gly residues.

It belongs to the peptidase C19 family. In terms of assembly, interacts with atms/PAF1, but not with CycT.

The protein localises to the nucleus. It localises to the nucleolus. The catalysed reaction is Thiol-dependent hydrolysis of ester, thioester, amide, peptide and isopeptide bonds formed by the C-terminal Gly of ubiquitin (a 76-residue protein attached to proteins as an intracellular targeting signal).. In terms of biological role, required for maintaining multiple types of adult stem cells, including male and female germline, epithelial follicle cell and intestinal stem cells. May function as a transcriptional repressor by continually deubiquiting histone H2B at the promoters of genes critical for cellular differentiation, thereby preventing histone H3 'Lys-4' trimethylation (H3K4). Controls selective autophagy activation by ubiquitinated proteins. The protein is Ubiquitin carboxyl-terminal hydrolase 36 (Usp36) of Drosophila willistoni (Fruit fly).